The sequence spans 511 residues: Cytochrome P450 monooxygenase esdpI (511 aa).

The helical transmembrane segment at Val-14–Ile-34 threads the bilayer. Position 453 (Cys-453) interacts with heme.

Belongs to the cytochrome P450 family. Heme serves as cofactor.

The protein localises to the membrane. It participates in secondary metabolite biosynthesis; terpenoid biosynthesis. In terms of biological role, cytochrome P450 monooxygenase; part of the cluster that mediates the biosynthesis of shearones, diterpenoid pyrones (DPs) which are structurally diverse meroterpenoids consisting of a diterpene linked by a pyrone, and which may exhibit a range of bioactivities. Whitin the pathway, esdpI takes part in the molecular scaffold modification via the hydroxylation at C-20 and can transform shearone C into shearone G. The molecular scaffold is commonly biosynthesized by a series of enzymes including the non-reducing polyketide synthase (NR-PKS) esdpA that generates an alpha-pyrone; the prenyltransferase esdpC that attaches a geranylgeranyl pyrophosphate (GGPP) produced by the GGPP synthase (GGPPS) esdpD onto the pyrone unit; the FAD-dependent monooxygenase esdpE that converts an olefin on the diterpene unit into an epoxide; and the terpene cyclase esdpB that catalyzes the cyclization reactions to give the molecular backbone shearone A. In the modification steps, esdpF oxidizes the hydroxy group to a ketone at C-3 and esdpG then attaches hydroxy groups at both C-11 and C-12. After that, esdpI hydroxylates at C-20 and esdpH hydroxylates at C-6'. The ether bridge is generated by nucleophilic attack of the hydroxy group at C-20 to the carbonyl carbon at C-3. EsdpH can also functions prior to esdpI. The different combinations of these modification enzymes lead to the production of diverse shearone derivatives, shearone I being the end product of the pathway. The alpha-ketoglutarate-dependent dioxygenase esdpJ seems not to be involved in this pathway. In Penicillium shearii (Eupenicillium shearii), this protein is Cytochrome P450 monooxygenase esdpI.